The primary structure comprises 435 residues: ATP-dependent RNA helicase RhlB (435 aa).

A Q motif motif is present at residues 9-37 (QKFADLGLNPQVVEGLEKKGFEFCTPIQA). The 180-residue stretch at 40–219 (LPVLLSGQDI…FEHMHNPEHV (180 aa)) folds into the Helicase ATP-binding domain. Residue 53–60 (AQTGTGKT) coordinates ATP. The DEAD box motif lies at 165 to 168 (DEAD). In terms of domain architecture, Helicase C-terminal spans 245 to 390 (ALLQTLIEEE…VSDYDSSALI (146 aa)). The tract at residues 395-435 (APVRTPSARNQQRRTNTGGARSGDRKSNNRRPRQPRQHKEA) is disordered. Residues 401–413 (SARNQQRRTNTGG) show a composition bias toward polar residues. A compositionally biased stretch (basic residues) spans 422–435 (NNRRPRQPRQHKEA).

Belongs to the DEAD box helicase family. RhlB subfamily. In terms of assembly, component of the RNA degradosome, which is a multiprotein complex involved in RNA processing and mRNA degradation.

Its subcellular location is the cytoplasm. The enzyme catalyses ATP + H2O = ADP + phosphate + H(+). Functionally, DEAD-box RNA helicase involved in RNA degradation. Has RNA-dependent ATPase activity and unwinds double-stranded RNA. The polypeptide is ATP-dependent RNA helicase RhlB (Vibrio vulnificus (strain CMCP6)).